The sequence spans 711 residues: Retrovirus-related Pol polyprotein from type-1 retrotransposable element R2 (711 aa).

The 279-residue stretch at 45–323 (LHLLRGHVPT…QTFRYLGHFF (279 aa)) folds into the Reverse transcriptase domain. The interval 444 to 711 (LFSCPSFDHL…RAVWSRQAGA (268 aa)) is nucleic acid-binding endonuclease.

It carries out the reaction DNA(n) + a 2'-deoxyribonucleoside 5'-triphosphate = DNA(n+1) + diphosphate. The sequence is that of Retrovirus-related Pol polyprotein from type-1 retrotransposable element R2 from Popillia japonica (Japanese beetle).